The chain runs to 99 residues: Malonate decarboxylase acyl carrier protein (99 aa).

An O-(phosphoribosyl dephospho-coenzyme A)serine modification is found at Ser25.

It belongs to the MdcC family. In terms of processing, covalently binds the prosthetic group of malonate decarboxylase.

The protein localises to the cytoplasm. Subunit of malonate decarboxylase, it is an acyl carrier protein to which acetyl and malonyl thioester residues are bound via a 2'-(5''-phosphoribosyl)-3'-dephospho-CoA prosthetic group and turn over during the catalytic mechanism. The polypeptide is Malonate decarboxylase acyl carrier protein (Pseudomonas aeruginosa (strain UCBPP-PA14)).